The primary structure comprises 137 residues: Histone H2B (137 aa).

Positions 1-10 are enriched in basic and acidic residues; sequence MPPKAADKKP. Positions 1–45 are disordered; the sequence is MPPKAADKKPASKAPATASKAPEKKDAGKKTAASGDKKKRTKTRK. Lys8 and Lys9 each carry N6-acetyllysine; alternate. Residues Lys8 and Lys9 each participate in a glycyl lysine isopeptide (Lys-Gly) (interchain with G-Cter in SUMO); alternate cross-link. Position 12 is a phosphoserine (Ser12). Lys13 is modified (N6-acetyllysine). Lys24 is modified (N6-acetyllysine; alternate). Residue Lys24 forms a Glycyl lysine isopeptide (Lys-Gly) (interchain with G-Cter in SUMO); alternate linkage. Lys25 participates in a covalent cross-link: Glycyl lysine isopeptide (Lys-Gly) (interchain with G-Cter in SUMO). Residue Lys131 forms a Glycyl lysine isopeptide (Lys-Gly) (interchain with G-Cter in ubiquitin) linkage.

This sequence belongs to the histone H2B family. As to quaternary structure, the nucleosome is a histone octamer containing two molecules each of H2A, H2B, H3 and H4 assembled in one H3-H4 heterotetramer and two H2A-H2B heterodimers. The octamer wraps approximately 147 bp of DNA. Monoubiquitinated by the UBC2-BRE1 complex to form H2BK123ub1. H2BK123ub1 gives a specific tag for epigenetic transcriptional activation and is also prerequisite for H3K4me and H3K79me formation. H2BK123ub1 also modulates the formation of double-strand breaks during meiosis and is a prerequisite for DNA-damage checkpoint activation. Post-translationally, phosphorylated by STE20 to form H2BS10ph during progression through meiotic prophase. May be correlated with chromosome condensation. In terms of processing, acetylated by GCN5 to form H2BK11ac and H2BK16ac. H2BK16ac can also be formed by ESA1. Acetylation of N-terminal lysines and particularly formation of H2BK11acK16ac has a positive effect on transcription. Sumoylation to form H2BK6su or H2BK7su, and probably also H2BK16su or H2BK17su, occurs preferentially near the telomeres and represses gene transcription.

The protein resides in the nucleus. Its subcellular location is the chromosome. In terms of biological role, core component of nucleosome. Nucleosomes wrap and compact DNA into chromatin, limiting DNA accessibility to the cellular machineries which require DNA as a template. Histones thereby play a central role in transcription regulation, DNA repair, DNA replication and chromosomal stability. DNA accessibility is regulated via a complex set of post-translational modifications of histones, also called histone code, and nucleosome remodeling. The protein is Histone H2B (HTB1) of Pyricularia oryzae (strain Y34) (Rice blast fungus).